The chain runs to 282 residues: 4-hydroxy-3-methylbut-2-enyl diphosphate reductase (282 aa).

C12 lines the [4Fe-4S] cluster pocket. H40 and H72 together coordinate (2E)-4-hydroxy-3-methylbut-2-enyl diphosphate. Dimethylallyl diphosphate is bound by residues H40 and H72. Isopentenyl diphosphate-binding residues include H40 and H72. C94 is a binding site for [4Fe-4S] cluster. H122 is a (2E)-4-hydroxy-3-methylbut-2-enyl diphosphate binding site. Residue H122 participates in dimethylallyl diphosphate binding. Residue H122 coordinates isopentenyl diphosphate. The Proton donor role is filled by E124. T160 contributes to the (2E)-4-hydroxy-3-methylbut-2-enyl diphosphate binding site. Residue C188 coordinates [4Fe-4S] cluster. Positions 216, 218, and 260 each coordinate (2E)-4-hydroxy-3-methylbut-2-enyl diphosphate. Residues S216, N218, and S260 each coordinate dimethylallyl diphosphate. Positions 216, 218, and 260 each coordinate isopentenyl diphosphate.

The protein belongs to the IspH family. It depends on [4Fe-4S] cluster as a cofactor.

The catalysed reaction is isopentenyl diphosphate + 2 oxidized [2Fe-2S]-[ferredoxin] + H2O = (2E)-4-hydroxy-3-methylbut-2-enyl diphosphate + 2 reduced [2Fe-2S]-[ferredoxin] + 2 H(+). The enzyme catalyses dimethylallyl diphosphate + 2 oxidized [2Fe-2S]-[ferredoxin] + H2O = (2E)-4-hydroxy-3-methylbut-2-enyl diphosphate + 2 reduced [2Fe-2S]-[ferredoxin] + 2 H(+). Its pathway is isoprenoid biosynthesis; dimethylallyl diphosphate biosynthesis; dimethylallyl diphosphate from (2E)-4-hydroxy-3-methylbutenyl diphosphate: step 1/1. It functions in the pathway isoprenoid biosynthesis; isopentenyl diphosphate biosynthesis via DXP pathway; isopentenyl diphosphate from 1-deoxy-D-xylulose 5-phosphate: step 6/6. Its function is as follows. Catalyzes the conversion of 1-hydroxy-2-methyl-2-(E)-butenyl 4-diphosphate (HMBPP) into a mixture of isopentenyl diphosphate (IPP) and dimethylallyl diphosphate (DMAPP). Acts in the terminal step of the DOXP/MEP pathway for isoprenoid precursor biosynthesis. The chain is 4-hydroxy-3-methylbut-2-enyl diphosphate reductase from Geobacter sulfurreducens (strain ATCC 51573 / DSM 12127 / PCA).